Reading from the N-terminus, the 256-residue chain is Acetylglutamate kinase (256 aa).

Substrate is bound by residues 40–41, Arg62, and Asn153; that span reads GG.

The protein belongs to the acetylglutamate kinase family. ArgB subfamily.

Its subcellular location is the cytoplasm. The enzyme catalyses N-acetyl-L-glutamate + ATP = N-acetyl-L-glutamyl 5-phosphate + ADP. The protein operates within amino-acid biosynthesis; L-arginine biosynthesis; N(2)-acetyl-L-ornithine from L-glutamate: step 2/4. In terms of biological role, catalyzes the ATP-dependent phosphorylation of N-acetyl-L-glutamate. This Bacillus cytotoxicus (strain DSM 22905 / CIP 110041 / 391-98 / NVH 391-98) protein is Acetylglutamate kinase.